Here is a 368-residue protein sequence, read N- to C-terminus: tRNA(Met) cytidine acetate ligase (368 aa).

Residues 7–20 (IAEFNPFHNGHKYL), G96, N152, and R175 each bind ATP.

The protein belongs to the TmcAL family.

The protein resides in the cytoplasm. It catalyses the reaction cytidine(34) in elongator tRNA(Met) + acetate + ATP = N(4)-acetylcytidine(34) in elongator tRNA(Met) + AMP + diphosphate. In terms of biological role, catalyzes the formation of N(4)-acetylcytidine (ac(4)C) at the wobble position of elongator tRNA(Met), using acetate and ATP as substrates. First activates an acetate ion to form acetyladenylate (Ac-AMP) and then transfers the acetyl group to tRNA to form ac(4)C34. The chain is tRNA(Met) cytidine acetate ligase from Streptococcus pyogenes serotype M5 (strain Manfredo).